The primary structure comprises 456 residues: RuvB-like 1 (456 aa).

Residue K2 forms a Glycyl lysine isopeptide (Lys-Gly) (interchain with G-Cter in SUMO2) linkage. 70–77 (GPPGTGKT) lines the ATP pocket. K225 participates in a covalent cross-link: Glycyl lysine isopeptide (Lys-Gly) (interchain with G-Cter in SUMO1); alternate. K225 is covalently cross-linked (Glycyl lysine isopeptide (Lys-Gly) (interchain with G-Cter in SUMO2); alternate). Residue K445 forms a Glycyl lysine isopeptide (Lys-Gly) (interchain with G-Cter in SUMO2) linkage. K453 carries the N6-acetyllysine modification.

Belongs to the RuvB family. Forms homohexameric rings. Can form a dodecamer with RUVBL2 made of two stacked hexameric rings; however, even though RUVBL1 and RUVBL2 are present in equimolar ratio, the oligomeric status of each hexamer is not known. Oligomerization may regulate binding to nucleic acids and conversely, binding to nucleic acids may affect the dodecameric assembly. Interaction of the complex with DHX34 results in conformational changes of the N-terminus of the RUVBL2 subunits, resulting in loss of nucleotide binding ability and ATP hydrolysis of the complex. Interacts with the transcriptional activation domain of MYC. Component of the RNA polymerase II holoenzyme complex. May also act to bridge the LEF1/TCF1-CTNNB1 complex and TBP. Component of the NuA4 histone acetyltransferase complex which contains the catalytic subunit KAT5/TIP60 and the subunits EP400, TRRAP/PAF400, BRD8/SMAP, EPC1, DMAP1/DNMAP1, RUVBL1/TIP49, RUVBL2, ING3, actin, ACTL6A/BAF53A, MORF4L1/MRG15, MORF4L2/MRGX, MRGBP, YEATS4/GAS41, VPS72/YL1 and MEAF6. The NuA4 complex interacts with MYC and the adenovirus E1A protein. RUVBL1 interacts with EP400. Component of a NuA4-related complex which contains EP400, TRRAP/PAF400, SRCAP, BRD8/SMAP, EPC1, DMAP1/DNMAP1, RUVBL1/TIP49, RUVBL2, actin, ACTL6A/BAF53A, VPS72 and YEATS4/GAS41. Component of the BAF53 complex, at least composed of ACTL6A/BAF53A, RUVBL1/TIP49, SMARCA2/BRM, and TRRAP/PAF400. Component of some MLL1/MLL complex, at least composed of the core components KMT2A/MLL1, ASH2L, HCFC1/HCF1, WDR5 and RBBP5, as well as the facultative components BACC1, CHD8, E2F6, HSP70, INO80C, KANSL1, LAS1L, MAX, MCRS1, MGA, MYST1/MOF, PELP1, PHF20, PRP31, RING2, RUVB1/TIP49A, RUVB2/TIP49B, SENP3, TAF1, TAF4, TAF6, TAF7, TAF9 and TEX10. Associates with alpha and gamma tubulins, particularly during metaphase and early anaphase. Interacts with NPAT. Component of the chromatin-remodeling INO80 complex; specifically part of a complex module associated with the helicase ATP-binding and the helicase C-terminal domain of INO80. Interacts with IGHMBP2. Interacts with OFD1. Interacts with HINT1. Component of a complex with USP49 and PSMC5. Component of a SWR1-like complex. Component of the R2TP complex composed at least of RUVBL1, RUVBL2, RPAP3 and PIHD1. Component of the PAQosome complex which is responsible for the biogenesis of several protein complexes and which consists of R2TP complex members RUVBL1, RUVBL2, RPAP3 and PIH1D1, URI complex members PFDN2, PFDN6, PDRG1, UXT and URI1 as well as ASDURF, POLR2E and DNAAF10/WDR92. Interacts with PIH1D1. Interacts with ITFG1. Interacts with WAC; WAC positively regulates MTOR activity by promoting the assembly of the TTT complex composed of TELO2, TTI1 and TTI2 and the RUVBL complex composed of RUVBL1 and RUVBL2 into the TTT-RUVBL complex which leads to the dimerization of the mTORC1 complex and its subsequent activation. The RUVBL1/RUVBL2 complex interacts with ZNHIT1 (via HIT-type zinc finger), ZNHIT3 (via HIT-type zinc finger), ZNHIT6 (via HIT-type zinc finger) and DDX59/ZNHIT5 (via HIT-type zinc finger) in the presence of ADP. Interacts with NOPCHAP1; the interaction is direct and disrupted upon ATP binding. Interacts with SMG1. Interacts with NOP2, NOP56 and NUFIP1.

The protein localises to the nucleus matrix. Its subcellular location is the nucleus. It is found in the nucleoplasm. It localises to the cytoplasm. The protein resides in the membrane. The protein localises to the cytoskeleton. Its subcellular location is the microtubule organizing center. It is found in the centrosome. It localises to the dynein axonemal particle. The catalysed reaction is ATP + H2O = ADP + phosphate + H(+). Possesses single-stranded DNA-stimulated ATPase and ATP-dependent DNA helicase (3' to 5') activity; hexamerization is thought to be critical for ATP hydrolysis and adjacent subunits in the ring-like structure contribute to the ATPase activity. Component of the NuA4 histone acetyltransferase complex which is involved in transcriptional activation of select genes principally by acetylation of nucleosomal histones H4 and H2A. This modification may both alter nucleosome-DNA interactions and promote interaction of the modified histones with other proteins which positively regulate transcription. This complex may be required for the activation of transcriptional programs associated with oncogene and proto-oncogene mediated growth induction, tumor suppressor mediated growth arrest and replicative senescence, apoptosis, and DNA repair. The NuA4 complex ATPase and helicase activities seem to be, at least in part, contributed by the association of RUVBL1 and RUVBL2 with EP400. NuA4 may also play a direct role in DNA repair when recruited to sites of DNA damage. Component of a SWR1-like complex that specifically mediates the removal of histone H2A.Z/H2AZ1 from the nucleosome. Proposed core component of the chromatin remodeling INO80 complex which exhibits DNA- and nucleosome-activated ATPase activity and catalyzes ATP-dependent nucleosome sliding. Plays an essential role in oncogenic transformation by MYC and also modulates transcriptional activation by the LEF1/TCF1-CTNNB1 complex. Essential for cell proliferation. May be able to bind plasminogen at cell surface and enhance plasminogen activation. The protein is RuvB-like 1 (Ruvbl1) of Mus musculus (Mouse).